The primary structure comprises 937 residues: Valine--tRNA ligase (937 aa).

The short motif at 44–54 (PNVTGTLHMGH) is the 'HIGH' region element. Residues 548–552 (KMSKS) carry the 'KMSKS' region motif. Lysine 551 provides a ligand contact to ATP. Positions 874–937 (AAETARLTKE…KLKAQLLKLA (64 aa)) form a coiled coil.

The protein belongs to the class-I aminoacyl-tRNA synthetase family. ValS type 1 subfamily. In terms of assembly, monomer.

It is found in the cytoplasm. The catalysed reaction is tRNA(Val) + L-valine + ATP = L-valyl-tRNA(Val) + AMP + diphosphate. Its function is as follows. Catalyzes the attachment of valine to tRNA(Val). As ValRS can inadvertently accommodate and process structurally similar amino acids such as threonine, to avoid such errors, it has a 'posttransfer' editing activity that hydrolyzes mischarged Thr-tRNA(Val) in a tRNA-dependent manner. This Laribacter hongkongensis (strain HLHK9) protein is Valine--tRNA ligase.